The chain runs to 209 residues: Somatotropin (209 aa).

The signal sequence occupies residues 1–22 (MGQVFLLMPVLLVAGYLSLGAA). H38 contributes to the Zn(2+) binding site. C71 and C182 are joined by a disulfide. E191 contributes to the Zn(2+) binding site. C199 and C207 form a disulfide bridge.

This sequence belongs to the somatotropin/prolactin family.

It localises to the secreted. In terms of biological role, growth hormone plays an important role in growth control and is involved in the regulation of several anabolic processes. Implicated as an osmoregulatory substance important for seawater adaptation. This is Somatotropin (gh) from Esox lucius (Northern pike).